The chain runs to 423 residues: Glucose-1-phosphate adenylyltransferase (423 aa).

Alpha-D-glucose 1-phosphate is bound by residues Tyr108, Gly173, Glu188–Lys189, and Ser207.

Belongs to the bacterial/plant glucose-1-phosphate adenylyltransferase family. In terms of assembly, homotetramer.

The catalysed reaction is alpha-D-glucose 1-phosphate + ATP + H(+) = ADP-alpha-D-glucose + diphosphate. It participates in glycan biosynthesis; glycogen biosynthesis. Its function is as follows. Involved in the biosynthesis of ADP-glucose, a building block required for the elongation reactions to produce glycogen. Catalyzes the reaction between ATP and alpha-D-glucose 1-phosphate (G1P) to produce pyrophosphate and ADP-Glc. The sequence is that of Glucose-1-phosphate adenylyltransferase from Francisella tularensis subsp. mediasiatica (strain FSC147).